Reading from the N-terminus, the 323-residue chain is tRNA U34 carboxymethyltransferase (323 aa).

Carboxy-S-adenosyl-L-methionine contacts are provided by residues Lys91, Trp105, Lys110, Gly130, 152-154 (DPT), 181-182 (IE), Met196, Tyr200, and Arg315.

It belongs to the class I-like SAM-binding methyltransferase superfamily. CmoB family. Homotetramer.

The enzyme catalyses carboxy-S-adenosyl-L-methionine + 5-hydroxyuridine(34) in tRNA = 5-carboxymethoxyuridine(34) in tRNA + S-adenosyl-L-homocysteine + H(+). Catalyzes carboxymethyl transfer from carboxy-S-adenosyl-L-methionine (Cx-SAM) to 5-hydroxyuridine (ho5U) to form 5-carboxymethoxyuridine (cmo5U) at position 34 in tRNAs. This Photorhabdus laumondii subsp. laumondii (strain DSM 15139 / CIP 105565 / TT01) (Photorhabdus luminescens subsp. laumondii) protein is tRNA U34 carboxymethyltransferase.